Consider the following 138-residue polypeptide: Large ribosomal subunit protein bL17 (138 aa).

The protein belongs to the bacterial ribosomal protein bL17 family. Part of the 50S ribosomal subunit. Contacts protein L32.

In Methylorubrum extorquens (strain CM4 / NCIMB 13688) (Methylobacterium extorquens), this protein is Large ribosomal subunit protein bL17.